The primary structure comprises 568 residues: Protein disconnected (568 aa).

Positions Gly16 to Asn77 are disordered. Residues Pro19–Leu29 are compositionally biased toward basic residues. Positions Pro30–Gly45 are enriched in low complexity. A compositionally biased stretch (gly residues) spans Gly46–Ser62. 2 C2H2-type zinc fingers span residues Val92–His115 and His120–Asn145. Disordered regions lie at residues Arg134–Ile157, Leu220–Phe364, Ser391–Ser419, and Gln501–Val568. A compositionally biased stretch (acidic residues) spans Asn235–Asp246. Positions Gln253 to Ser263 are enriched in polar residues. Positions Ser282–Ala292 are enriched in low complexity. Residues Ser313 to Pro360 are compositionally biased toward basic and acidic residues. Over residues Ser391–Ala402 the composition is skewed to low complexity. Residues His520–His550 show a composition bias toward basic residues. The span at Ser558–Val568 shows a compositional bias: polar residues.

In terms of tissue distribution, expressed at low levels in the adult head and very low, but detectable, levels in the body.

It localises to the nucleus. Functionally, required for the establishment of stable connections between the larval optic nerves, the Bolwig's nerves, and their target cells in the brain during embryonic development. The chain is Protein disconnected (disco) from Drosophila melanogaster (Fruit fly).